The primary structure comprises 151 residues: Large ribosomal subunit protein bL9 (151 aa).

It belongs to the bacterial ribosomal protein bL9 family.

Binds to the 23S rRNA. The sequence is that of Large ribosomal subunit protein bL9 from Thermosipho melanesiensis (strain DSM 12029 / CIP 104789 / BI429).